A 572-amino-acid polypeptide reads, in one-letter code: Acyl-coenzyme A synthetase ACSM2, mitochondrial (572 aa).

The transit peptide at 1–46 directs the protein to the mitochondrion; sequence MHWLWKIPRLCTFWGTEMFHRTFHMNIKKLMPIQWGHQEVPAKFNF. Glutamine 139 contributes to the CoA binding site. ATP-binding positions include 221–229, 359–364, aspartate 446, and arginine 461; these read TSGTSGPPK and EIYGQT. Threonine 364 serves as a coordination point for substrate. Residue 469 to 471 participates in CoA binding; it reads SGY. Substrate is bound at residue arginine 472. CoA-binding positions include arginine 501, lysine 532, and 540–542; that span reads YPR. Position 557 (lysine 557) interacts with ATP.

The protein belongs to the ATP-dependent AMP-binding enzyme family. As to quaternary structure, monomer. The cofactor is Mg(2+). Mn(2+) serves as cofactor. In terms of tissue distribution, detected in kidney, in proximal tubules.

The protein localises to the mitochondrion. It carries out the reaction a medium-chain fatty acid + ATP + CoA = a medium-chain fatty acyl-CoA + AMP + diphosphate. The enzyme catalyses benzoate + ATP + CoA = benzoyl-CoA + AMP + diphosphate. It catalyses the reaction hexanoate + ATP + CoA = hexanoyl-CoA + AMP + diphosphate. The catalysed reaction is butanoate + ATP + CoA = butanoyl-CoA + AMP + diphosphate. It carries out the reaction octanoate + ATP + CoA = octanoyl-CoA + AMP + diphosphate. The enzyme catalyses decanoate + ATP + CoA = decanoyl-CoA + AMP + diphosphate. Catalyzes the activation of fatty acids by CoA to produce an acyl-CoA, the first step in fatty acid metabolism. Capable of activating medium-chain fatty acids (e.g. butyric (C4) to decanoic (C10) acids), and certain carboxylate-containing xenobiotics, e.g. benzoate. The polypeptide is Acyl-coenzyme A synthetase ACSM2, mitochondrial (Acsm2) (Rattus norvegicus (Rat)).